A 190-amino-acid polypeptide reads, in one-letter code: Imidazoleglycerol-phosphate dehydratase (190 aa).

The protein belongs to the imidazoleglycerol-phosphate dehydratase family.

The protein localises to the cytoplasm. It carries out the reaction D-erythro-1-(imidazol-4-yl)glycerol 3-phosphate = 3-(imidazol-4-yl)-2-oxopropyl phosphate + H2O. The protein operates within amino-acid biosynthesis; L-histidine biosynthesis; L-histidine from 5-phospho-alpha-D-ribose 1-diphosphate: step 6/9. The polypeptide is Imidazoleglycerol-phosphate dehydratase (Wolinella succinogenes (strain ATCC 29543 / DSM 1740 / CCUG 13145 / JCM 31913 / LMG 7466 / NCTC 11488 / FDC 602W) (Vibrio succinogenes)).